The primary structure comprises 290 residues: Shikimate dehydrogenase (NADP(+)) (290 aa).

Shikimate contacts are provided by residues 24 to 26 and Thr71; that span reads SLS. Catalysis depends on Lys75, which acts as the Proton acceptor. Asn96 and Asp111 together coordinate shikimate. NADP(+) is bound by residues 136–140, 160–165, and Leu233; these read GAGGA and NRTVDR. Tyr235 contacts shikimate. An NADP(+)-binding site is contributed by Gly256.

It belongs to the shikimate dehydrogenase family. As to quaternary structure, homodimer.

The enzyme catalyses shikimate + NADP(+) = 3-dehydroshikimate + NADPH + H(+). It functions in the pathway metabolic intermediate biosynthesis; chorismate biosynthesis; chorismate from D-erythrose 4-phosphate and phosphoenolpyruvate: step 4/7. Its function is as follows. Involved in the biosynthesis of the chorismate, which leads to the biosynthesis of aromatic amino acids. Catalyzes the reversible NADPH linked reduction of 3-dehydroshikimate (DHSA) to yield shikimate (SA). This is Shikimate dehydrogenase (NADP(+)) from Methanopyrus kandleri (strain AV19 / DSM 6324 / JCM 9639 / NBRC 100938).